The primary structure comprises 397 residues: Succinate--CoA ligase [ADP-forming] subunit beta (397 aa).

The ATP-grasp domain maps to 9–254 (KALLRSYGAP…ETEEDPKELA (246 aa)). Residues K46, 53–55 (GRG), E109, S112, and E117 each bind ATP. Positions 209 and 223 each coordinate Mg(2+). Substrate-binding positions include N274 and 331 to 333 (GIM).

It belongs to the succinate/malate CoA ligase beta subunit family. In terms of assembly, heterotetramer of two alpha and two beta subunits. The cofactor is Mg(2+).

It carries out the reaction succinate + ATP + CoA = succinyl-CoA + ADP + phosphate. It catalyses the reaction GTP + succinate + CoA = succinyl-CoA + GDP + phosphate. Its pathway is carbohydrate metabolism; tricarboxylic acid cycle; succinate from succinyl-CoA (ligase route): step 1/1. Its function is as follows. Succinyl-CoA synthetase functions in the citric acid cycle (TCA), coupling the hydrolysis of succinyl-CoA to the synthesis of either ATP or GTP and thus represents the only step of substrate-level phosphorylation in the TCA. The beta subunit provides nucleotide specificity of the enzyme and binds the substrate succinate, while the binding sites for coenzyme A and phosphate are found in the alpha subunit. The polypeptide is Succinate--CoA ligase [ADP-forming] subunit beta (Cereibacter sphaeroides (strain ATCC 17025 / ATH 2.4.3) (Rhodobacter sphaeroides)).